The chain runs to 149 residues: Alpha-crystallin A chain (149 aa).

The sHSP domain occupies 41–149 (LFRSVLESGI…DPTHSERPIP (109 aa)). Residues His89, Glu91, His96, and His143 each contribute to the Zn(2+) site.

It belongs to the small heat shock protein (HSP20) family. As to quaternary structure, heteropolymer composed of three CRYAA and one CRYAB subunits. Inter-subunit bridging via zinc ions enhances stability, which is crucial as there is no protein turn over in the lens. Can also form homodimers and homotetramers (dimers of dimers) which serve as the building blocks of homooligomers. Within homooligomers, the zinc-binding motif is created from residues of 3 different molecules. His-89 and Glu-91 from one molecule are ligands of the zinc ion, and His-96 and His-143 residues from additional molecules complete the site with tetrahedral coordination geometry.

The protein resides in the cytoplasm. Its subcellular location is the nucleus. Functionally, contributes to the transparency and refractive index of the lens. May act as a chaperone, preventing aggregation of various proteins under a wide range of stress conditions. The polypeptide is Alpha-crystallin A chain (CRYAA) (Anas platyrhynchos (Mallard)).